The following is a 1082-amino-acid chain: AP-3 complex subunit beta-2 (1082 aa).

The interval 1-30 is disordered; it reads MSAAPAYSEDKGGSAGPGEPEYGHDPASGG. S272 and S282 each carry phosphoserine. The segment covering 666 to 677 has biased composition (basic and acidic residues); it reads NREKRKEKEKPF. Positions 666-801 are disordered; it reads NREKRKEKEK…KTPPGSKSAP (136 aa). Over residues 691-700 the composition is skewed to acidic residues; that stretch reads ADSEPESESE. Residues 704–715 are compositionally biased toward low complexity; that stretch reads KSSSGSGSGESS. Acidic residues-rich tracts occupy residues 716-726 and 775-784; these read SESDNEEEDEE and VTSESEEEQV.

It belongs to the adaptor complexes large subunit family. In terms of assembly, adaptor protein complex 3 (AP-3) is a heterotetramer composed of two large adaptins (delta-type subunit AP3D1 and beta-type subunit AP3B1 or AP3B2), a medium adaptin (mu-type subunit AP3M1 or AP3M2) and a small adaptin (sigma-type subunit APS1 or AP3S2). AP-3 associates with the BLOC-1 complex.

The protein localises to the cytoplasmic vesicle. Its subcellular location is the clathrin-coated vesicle membrane. It localises to the golgi apparatus. Functionally, subunit of non-clathrin- and clathrin-associated adaptor protein complex 3 (AP-3) that plays a role in protein sorting in the late-Golgi/trans-Golgi network (TGN) and/or endosomes. The AP complexes mediate both the recruitment of clathrin to membranes and the recognition of sorting signals within the cytosolic tails of transmembrane cargo molecules. AP-3 appears to be involved in the sorting of a subset of transmembrane proteins targeted to lysosomes and lysosome-related organelles. In concert with the BLOC-1 complex, AP-3 is required to target cargos into vesicles assembled at cell bodies for delivery into neurites and nerve terminals. This chain is AP-3 complex subunit beta-2 (Ap3b2), found in Mus musculus (Mouse).